The following is a 433-amino-acid chain: tRNA(Ile)-lysidine synthase (433 aa).

27–32 (SGGLDS) contributes to the ATP binding site.

This sequence belongs to the tRNA(Ile)-lysidine synthase family.

Its subcellular location is the cytoplasm. It carries out the reaction cytidine(34) in tRNA(Ile2) + L-lysine + ATP = lysidine(34) in tRNA(Ile2) + AMP + diphosphate + H(+). Functionally, ligates lysine onto the cytidine present at position 34 of the AUA codon-specific tRNA(Ile) that contains the anticodon CAU, in an ATP-dependent manner. Cytidine is converted to lysidine, thus changing the amino acid specificity of the tRNA from methionine to isoleucine. The chain is tRNA(Ile)-lysidine synthase from Legionella pneumophila subsp. pneumophila (strain Philadelphia 1 / ATCC 33152 / DSM 7513).